A 359-amino-acid polypeptide reads, in one-letter code: Membrane-bound lytic murein transglycosylase C (359 aa).

Positions 1–16 (MKKVLALALIAPLLIS) are cleaved as a signal peptide. Residue Cys-17 is the site of N-palmitoyl cysteine attachment. Cys-17 carries S-diacylglycerol cysteine lipidation.

It belongs to the transglycosylase Slt family.

Its subcellular location is the cell outer membrane. It carries out the reaction Exolytic cleavage of the (1-&gt;4)-beta-glycosidic linkage between N-acetylmuramic acid (MurNAc) and N-acetylglucosamine (GlcNAc) residues in peptidoglycan, from either the reducing or the non-reducing ends of the peptidoglycan chains, with concomitant formation of a 1,6-anhydrobond in the MurNAc residue.. In terms of biological role, murein-degrading enzyme. May play a role in recycling of muropeptides during cell elongation and/or cell division. The protein is Membrane-bound lytic murein transglycosylase C of Edwardsiella ictaluri (strain 93-146).